The following is an 89-amino-acid chain: Co-chaperonin GroES (89 aa).

The protein belongs to the GroES chaperonin family. In terms of assembly, heptamer of 7 subunits arranged in a ring. Interacts with the chaperonin GroEL.

The protein resides in the cytoplasm. Its function is as follows. Together with the chaperonin GroEL, plays an essential role in assisting protein folding. The GroEL-GroES system forms a nano-cage that allows encapsulation of the non-native substrate proteins and provides a physical environment optimized to promote and accelerate protein folding. GroES binds to the apical surface of the GroEL ring, thereby capping the opening of the GroEL channel. This Kosmotoga olearia (strain ATCC BAA-1733 / DSM 21960 / TBF 19.5.1) protein is Co-chaperonin GroES.